The chain runs to 452 residues: Transcription factor ETV6 (452 aa).

Over residues 1-10 (MSETPAQCSI) the composition is skewed to polar residues. The disordered stretch occupies residues 1 to 30 (MSETPAQCSIKQERISYTPPESPVPSYASS). Lys11 bears the N6-acetyllysine; alternate mark. A Glycyl lysine isopeptide (Lys-Gly) (interchain with G-Cter in SUMO2); alternate cross-link involves residue Lys11. A Phosphothreonine modification is found at Thr18. A Phosphoserine modification is found at Ser22. Residues 40–124 (ALRMEEDSIR…ELLQHILKQR (85 aa)) enclose the PNT domain. A disordered region spans residues 158 to 262 (VQRTPRPSVD…PKPSSPRQES (105 aa)). Residues Ser213 and Ser238 each carry the phosphoserine modification. A compositionally biased stretch (polar residues) spans 230–250 (QESYPLSVSPMENNHCPASSE). Ser257 carries the post-translational modification Phosphoserine; by MAPK14. Residue Lys288 forms a Glycyl lysine isopeptide (Lys-Gly) (interchain with G-Cter in SUMO2) linkage. N6-acetyllysine; alternate is present on Lys302. Lys302 is covalently cross-linked (Glycyl lysine isopeptide (Lys-Gly) (interchain with G-Cter in SUMO2); alternate). Ser323 is subject to Phosphoserine. Residues 339–420 (RLLWDYVYQL…PGQRLLFRFM (82 aa)) constitute a DNA-binding region (ETS). Residues Lys403 and Lys421 each participate in a glycyl lysine isopeptide (Lys-Gly) (interchain with G-Cter in SUMO2) cross-link.

This sequence belongs to the ETS family. Can form homodimers or heterodimers with TEL2 or FLI1. Interacts with L3MBTL1 and HDAC9. Post-translationally, phosphorylation of Ser-257 by MAPK14 (p38) inhibits ETV6 transcriptional repression. Ubiquitous.

The protein localises to the nucleus. In terms of biological role, transcriptional repressor; binds to the DNA sequence 5'-CCGGAAGT-3'. Plays a role in hematopoiesis and malignant transformation. The protein is Transcription factor ETV6 (ETV6) of Homo sapiens (Human).